A 125-amino-acid chain; its full sequence is Small ribosomal subunit protein uS12 (125 aa).

D89 is modified (3-methylthioaspartic acid). The interval 100–125 (GSLDTQGVKDRKQSRSKYGAKRPKAA) is disordered. Positions 113–125 (SRSKYGAKRPKAA) are enriched in basic residues.

It belongs to the universal ribosomal protein uS12 family. As to quaternary structure, part of the 30S ribosomal subunit. Contacts proteins S8 and S17. May interact with IF1 in the 30S initiation complex.

Functionally, with S4 and S5 plays an important role in translational accuracy. Its function is as follows. Interacts with and stabilizes bases of the 16S rRNA that are involved in tRNA selection in the A site and with the mRNA backbone. Located at the interface of the 30S and 50S subunits, it traverses the body of the 30S subunit contacting proteins on the other side and probably holding the rRNA structure together. The combined cluster of proteins S8, S12 and S17 appears to hold together the shoulder and platform of the 30S subunit. The polypeptide is Small ribosomal subunit protein uS12 (Dechloromonas aromatica (strain RCB)).